The chain runs to 205 residues: Putative protein phosphatase inhibitor 2-like protein 1 (205 aa).

Disordered stretches follow at residues 1-44 (MAAS…SKKS), 64-92 (GLMK…TETT), 107-148 (AEGL…TLHY), and 171-205 (VEEM…SRSS). Required for binding PPP1CC stretches follow at residues 12 to 17 (KGILKD) and 43 to 55 (KSQK…ILAT). Positions 17-26 (DNTSTTSSMV) are enriched in polar residues. Positions 30–44 (EHPRGSVHEQLSKKS) are enriched in basic and acidic residues. At threonine 73 the chain carries Phosphothreonine; by GSK3. Acidic residues-rich tracts occupy residues 80 to 91 (GDDEDACSDTET) and 121 to 130 (SSGEEDSDLS). Residue serine 87 is modified to Phosphoserine; by CK2. A compositionally biased stretch (basic and acidic residues) spans 131 to 144 (PEEREKKRQFEMRR). The tract at residues 147–150 (HYNE) is required for binding PPP1CC catalytic center, displacing metal ions and inhibition of PPP1CC catalytic activity. Polar residues predominate over residues 182–205 (SMNTEESNQGSTASDQQQNKSRSS).

It belongs to the protein phosphatase inhibitor 2 family.

Functionally, inhibitor of protein-phosphatase 1. In Homo sapiens (Human), this protein is Putative protein phosphatase inhibitor 2-like protein 1 (PPP1R2P1).